A 160-amino-acid chain; its full sequence is Major pollen allergen Bet v 1-G (160 aa).

Brassinolide-binding residues include Lys-55, Tyr-82, Tyr-84, and Asn-101.

Belongs to the BetVI family.

It localises to the cytoplasm. Its function is as follows. May be a general steroid carrier protein. The sequence is that of Major pollen allergen Bet v 1-G (BETV1G) from Betula pendula (European white birch).